A 142-amino-acid polypeptide reads, in one-letter code: MKTFTATPETVTRDWFVVDADGKTLGRIATEIATRLRGKHKPEYTPHVDTGDYIIVINAEKVTVTGNKAKGKTYYSHSGFPGGIKQISFEKLQAHKPEMIIEKAVKGMLPKGPLGRAMFRKLKVYAGAEHNHAAQQPQVLDI.

It belongs to the universal ribosomal protein uL13 family. In terms of assembly, part of the 50S ribosomal subunit.

This protein is one of the early assembly proteins of the 50S ribosomal subunit, although it is not seen to bind rRNA by itself. It is important during the early stages of 50S assembly. The sequence is that of Large ribosomal subunit protein uL13 from Shewanella putrefaciens (strain CN-32 / ATCC BAA-453).